Here is a 75-residue protein sequence, read N- to C-terminus: Salivary glue protein Sgs-8 (75 aa).

The first 24 residues, 1–24, serve as a signal peptide directing secretion; that stretch reads MKLLVVAVIACIMLIGFADPASGC.

The chain is Salivary glue protein Sgs-8 (Sgs8) from Drosophila melanogaster (Fruit fly).